A 79-amino-acid polypeptide reads, in one-letter code: Ubiquinol-cytochrome c reductase complex assembly factor 5 (79 aa).

The Mitochondrial matrix segment spans residues 1 to 20 (MSPYSGSVRRLLDSWPGKKR). A helical membrane pass occupies residues 21–43 (FGVYRFLPLFFLLGAGLEFSMIN). Topologically, residues 44-79 (WTVGETNFYRTFKRRQAKNYVEEQQHLQARAANNTN) are mitochondrial intermembrane.

Belongs to the UQCC5 family. In terms of assembly, interacts with respiratory complex III components Uqcc1 and RFeSP; the interactions are probably involved in the assembly and stability of the mitochondrial ubiquinol-cytochrome c reductase complex. Interacts with sloth2; the interaction stabilizes both components. Expressed in the brain.

It localises to the mitochondrion inner membrane. Its subcellular location is the mitochondrion. In terms of biological role, required for the assembly and stability of the mitochondrial ubiquinol-cytochrome c reductase complex (complex III (CIII) or cytochrome b-c1 complex), a multisubunit transmembrane complex that is part of the mitochondrial electron transport chain (ETC) which drives oxidative phosphorylation. In Drosophila melanogaster (Fruit fly), this protein is Ubiquinol-cytochrome c reductase complex assembly factor 5.